Reading from the N-terminus, the 163-residue chain is Staphylokinase (163 aa).

A signal peptide spans 1–27; sequence MLKRSLLFLTVLLLLFSFSSITNEVSA.

It belongs to the staphylokinase family.

It localises to the secreted. Functionally, potent plasminogen activator that converts plasminogen into plasmin. It forms a 1:1 complex with plasmin, which in turn activates other plasminogen molecules. This chain is Staphylokinase, found in Staphylococcus phage S phi-C (Bacteriophage S phi-C).